The following is an 859-amino-acid chain: MTAIDPQGLEKHTPMMRQYLTLKAQHPDMLLFYRMGDFYELFYEDAKRASELLGISLTARGKSGGDPIPMAGLPYHAVEGYLAKLVQLRVSVAICEQIGDPATSKGPVERKVVRIVTPGTLTDEALLQERQDNLLAALYQGKTGYGYATLDVASGRFVITELANTEALEAELQRTNPAELLYSEDFSEMSLIAAINGTRRRPEWEFDYDTCHRLLLNQFGTKDLKGFGIEDARLSLQAAGCLMQYVKDTQRTALPHINSIVRFNQSDSIVLDAATRRNLELTVNLQGGRENTLASVLDNTVTPMGSRMLQRWLHQPLRDHDIIRARQVSIEELLGNANYEILSEDLKAIGDIERITTRIALRNARPRDFARLRQALALLPQLQQTLTQAAAPHLKYLSQVIGEFPDELELLSRAVVDNPPMLIRDGGVIREGYNEELDQWRKLSEGATDYLHELEAREKQQTGISTLKVGYNRVHGYYIEVSRRESDLVPLSYQRRQTLKNTERYIIPELKEHEEKVLSSQGRALALEKQLWEQLFDLILPKLHELQDFARASAELDVLCNFAERAESLNYHCPDLSTAPGIQIEAGRHPVVEQVSQSPFIANPVTLNNERKMLIVTGPNMGGKSTYMRQVALITLMAHIGCYVPAEHAVIGPVDRIFTRIGASDDLASGRSTFMVEMTETANILHNATPNSLVLMDEIGRGTSTYDGLSLAWSAAEYLAKHLQAMTLFATHYFELTQLPELLSNVENVHLDAVEHGDSIVFMHAVQEGAASRSYGLQVAALAGVPNCVISAAKHKLHQLESRDHGKESCDAQQPLQQSISFSAPTPSPALEALAKLNPDELTPRQALDYLYNLKKLAL.

618–625 (GPNMGGKS) lines the ATP pocket.

The protein belongs to the DNA mismatch repair MutS family.

Its function is as follows. This protein is involved in the repair of mismatches in DNA. It is possible that it carries out the mismatch recognition step. This protein has a weak ATPase activity. The polypeptide is DNA mismatch repair protein MutS (Shewanella halifaxensis (strain HAW-EB4)).